The primary structure comprises 293 residues: tRNA-cytidine(32) 2-sulfurtransferase (293 aa).

The PP-loop motif signature appears at 62–67 (SGGKDS). [4Fe-4S] cluster-binding residues include cysteine 137, cysteine 140, and cysteine 228.

The protein belongs to the TtcA family. As to quaternary structure, homodimer. The cofactor is Mg(2+). [4Fe-4S] cluster is required as a cofactor.

Its subcellular location is the cytoplasm. The catalysed reaction is cytidine(32) in tRNA + S-sulfanyl-L-cysteinyl-[cysteine desulfurase] + AH2 + ATP = 2-thiocytidine(32) in tRNA + L-cysteinyl-[cysteine desulfurase] + A + AMP + diphosphate + H(+). The protein operates within tRNA modification. Its function is as follows. Catalyzes the ATP-dependent 2-thiolation of cytidine in position 32 of tRNA, to form 2-thiocytidine (s(2)C32). The sulfur atoms are provided by the cysteine/cysteine desulfurase (IscS) system. This is tRNA-cytidine(32) 2-sulfurtransferase from Brucella melitensis biotype 1 (strain ATCC 23456 / CCUG 17765 / NCTC 10094 / 16M).